A 422-amino-acid polypeptide reads, in one-letter code: GTPase Obg (422 aa).

Residues 1-158 (MFYDRAKIYV…LWLELELKVI (158 aa)) enclose the Obg domain. One can recognise an OBG-type G domain in the interval 159-330 (ADVGLIGFPN…VIHRVAELLA (172 aa)). Residues 165-172 (GFPNAGKS), 190-194 (FTTLV), 212-215 (DIPG), 282-285 (NKMD), and 311-313 (SAA) each bind GTP. The Mg(2+) site is built by serine 172 and threonine 192. The OCT domain maps to 344–422 (VMFEPEERFN…IGDWEFEWSE (79 aa)).

The protein belongs to the TRAFAC class OBG-HflX-like GTPase superfamily. OBG GTPase family. As to quaternary structure, monomer. Mg(2+) is required as a cofactor.

It localises to the cytoplasm. Functionally, an essential GTPase which binds GTP, GDP and possibly (p)ppGpp with moderate affinity, with high nucleotide exchange rates and a fairly low GTP hydrolysis rate. Plays a role in control of the cell cycle, stress response, ribosome biogenesis and in those bacteria that undergo differentiation, in morphogenesis control. This is GTPase Obg from Desulforamulus reducens (strain ATCC BAA-1160 / DSM 100696 / MI-1) (Desulfotomaculum reducens).